Consider the following 463-residue polypeptide: RuvB-like 2 (463 aa).

Alanine 2 is subject to N-acetylalanine. A Glycyl lysine isopeptide (Lys-Gly) (interchain with G-Cter in SUMO2) cross-link involves residue lysine 9. Position 77–84 (77–84 (GQPGTGKT)) interacts with ATP. Serine 437 carries the post-translational modification Phosphoserine. Residues lysine 444 and lysine 456 each participate in a glycyl lysine isopeptide (Lys-Gly) (interchain with G-Cter in SUMO2) cross-link.

It belongs to the RuvB family. Forms homohexameric rings. Can form a dodecamer with RUVBL1 made of two stacked hexameric rings; however, even though RUVBL1 and RUVBL2 are present in equimolar ratio, the oligomeric status of each hexamer is not known. Oligomerization may regulate binding to nucleic acids and conversely, binding to nucleic acids may affect the dodecameric assembly. Interaction of the complex with DHX34 results in conformational changes of the N-terminus of the RUVBL2 subunits, resulting in loss of nucleotide binding ability and ATP hydrolysis of the complex. Interacts with the transcriptional activation domain of MYC. Interacts with ATF2. Component of the RNA polymerase II holoenzyme complex. May also act to bridge the LEF1/TCF1-CTNNB1 complex and TBP. Component of the NuA4 histone acetyltransferase complex which contains the catalytic subunit KAT5/TIP60 and the subunits EP400, TRRAP/PAF400, BRD8/SMAP, EPC1, DMAP1/DNMAP1, RUVBL1/TIP49, RUVBL2, ING3, actin, ACTL6A/BAF53A, MORF4L1/MRG15, MORF4L2/MRGX, MRGBP, YEATS4/GAS41, VPS72/YL1 and MEAF6. The NuA4 complex interacts with MYC and the adenovirus E1A protein. RUVBL2 interacts with EP400. Component of a NuA4-related complex which contains EP400, TRRAP/PAF400, SRCAP, BRD8/SMAP, EPC1, DMAP1/DNMAP1, RUVBL1/TIP49, RUVBL2, actin, ACTL6A/BAF53A, VPS72 and YEATS4/GAS41. Interacts with NPAT. Component of the chromatin-remodeling INO80 complex; specifically part of a complex module associated with the helicase ATP-binding and the helicase C-terminal domain of INO80. Component of some MLL1/MLL complex, at least composed of the core components KMT2A/MLL1, ASH2L, HCFC1/HCF1, WDR5 and RBBP5, as well as the facultative components BACC1, CHD8, E2F6, HSP70, INO80C, KANSL1, LAS1L, MAX, MCRS1, MGA, MYST1/MOF, PELP1, PHF20, PRP31, RING2, RUVB1/TIP49A, RUVB2/TIP49B, SENP3, TAF1, TAF4, TAF6, TAF7, TAF9 and TEX10. Interacts with IGHMBP2. Interacts with TELO2. Interacts with HINT1. Component of a SWR1-like complex. Component of the R2TP complex composed at least of RUVBL1, RUVBL2, RPAP3 and PIHD1. Component of the PAQosome complex which is responsible for the biogenesis of several protein complexes and which consists of R2TP complex members RUVBL1, RUVBL2, RPAP3 and PIH1D1, URI complex members PFDN2, PFDN6, PDRG1, UXT and URI1 as well as ASDURF, POLR2E and DNAAF10/WDR92. Interacts with ITFG1. Interacts with ZMYND10. Interacts with WAC; WAC positively regulates MTOR activity by promoting the assembly of the TTT complex composed of TELO2, TTI1 and TTI2 and the RUVBL complex composed of RUVBL1 and RUVBL2 into the TTT-RUVBL complex which leads to the dimerization of the mTORC1 complex and its subsequent activation. Forms a complex with APPL1 and APPL2. Interacts with ZNHIT2 (via HIT-type zinc finger) in the presence of ATP or ADP; shows a stronger interaction in the presence of ADP. The RUVBL1/RUVBL2 complex interacts with ZNHIT1 (via HIT-type zinc finger), ZNHIT3 (via HIT-type zinc finger), ZNHIT6 (via HIT-type zinc finger) and DDX59/ZNHIT5 (via HIT-type zinc finger) in the presence of ADP. Interacts with NOPCHAP1; the interaction is direct and disrupted upon ATP binding. Interacts with SMG1.

It localises to the nucleus matrix. It is found in the nucleus. Its subcellular location is the nucleoplasm. The protein resides in the cytoplasm. The protein localises to the membrane. It localises to the dynein axonemal particle. It carries out the reaction ATP + H2O = ADP + phosphate + H(+). Its function is as follows. Possesses single-stranded DNA-stimulated ATPase and ATP-dependent DNA helicase (5' to 3') activity; hexamerization is thought to be critical for ATP hydrolysis and adjacent subunits in the ring-like structure contribute to the ATPase activity. Component of the NuA4 histone acetyltransferase complex which is involved in transcriptional activation of select genes principally by acetylation of nucleosomal histones H4 and H2A. This modification may both alter nucleosome-DNA interactions and promote interaction of the modified histones with other proteins which positively regulate transcription. This complex may be required for the activation of transcriptional programs associated with oncogene and proto-oncogene mediated growth induction, tumor suppressor mediated growth arrest and replicative senescence, apoptosis, and DNA repair. The NuA4 complex ATPase and helicase activities seem to be, at least in part, contributed by the association of RUVBL1 and RUVBL2 with EP400. NuA4 may also play a direct role in DNA repair when recruited to sites of DNA damage. Component of a SWR1-like complex that specifically mediates the removal of histone H2A.Z/H2AZ1 from the nucleosome. Proposed core component of the chromatin remodeling INO80 complex which exhibits DNA- and nucleosome-activated ATPase activity and catalyzes ATP-dependent nucleosome sliding. Plays an essential role in oncogenic transformation by MYC and also modulates transcriptional activation by the LEF1/TCF1-CTNNB1 complex. May also inhibit the transcriptional activity of ATF2. Involved in the endoplasmic reticulum (ER)-associated degradation (ERAD) pathway where it negatively regulates expression of ER stress response genes. May play a role in regulating the composition of the U5 snRNP complex. This is RuvB-like 2 (Ruvbl2) from Mus musculus (Mouse).